A 341-amino-acid polypeptide reads, in one-letter code: Phenylalanine--tRNA ligase alpha subunit (341 aa).

Glutamate 256 provides a ligand contact to Mg(2+).

It belongs to the class-II aminoacyl-tRNA synthetase family. Phe-tRNA synthetase alpha subunit type 1 subfamily. As to quaternary structure, tetramer of two alpha and two beta subunits. Mg(2+) is required as a cofactor.

It localises to the cytoplasm. It catalyses the reaction tRNA(Phe) + L-phenylalanine + ATP = L-phenylalanyl-tRNA(Phe) + AMP + diphosphate + H(+). The protein is Phenylalanine--tRNA ligase alpha subunit of Chlamydia felis (strain Fe/C-56) (Chlamydophila felis).